The sequence spans 625 residues: tRNA uridine 5-carboxymethylaminomethyl modification enzyme MnmG (625 aa).

FAD-binding positions include 13–18, valine 125, and serine 182; that span reads GGGHAG. NAD(+) is bound at residue 276-290; it reads GPRYCPSIEDKITRF. Position 373 (glutamine 373) interacts with FAD.

The protein belongs to the MnmG family. As to quaternary structure, homodimer. Heterotetramer of two MnmE and two MnmG subunits. Requires FAD as cofactor.

The protein resides in the cytoplasm. In terms of biological role, NAD-binding protein involved in the addition of a carboxymethylaminomethyl (cmnm) group at the wobble position (U34) of certain tRNAs, forming tRNA-cmnm(5)s(2)U34. In Lactococcus lactis subsp. lactis (strain IL1403) (Streptococcus lactis), this protein is tRNA uridine 5-carboxymethylaminomethyl modification enzyme MnmG.